Here is a 347-residue protein sequence, read N- to C-terminus: NADH-ubiquinone oxidoreductase chain 2 (347 aa).

11 helical membrane-spanning segments follow: residues Pro3–Ser23, His25–Met45, Tyr59–Ile79, Thr96–Pro116, Val122–Leu142, Val149–Gly169, Ile178–Pro198, Ser201–Phe221, Ile239–Gly259, Asp274–Met294, and Met326–Leu346.

This sequence belongs to the complex I subunit 2 family. As to quaternary structure, core subunit of respiratory chain NADH dehydrogenase (Complex I) which is composed of 45 different subunits. Interacts with TMEM242.

Its subcellular location is the mitochondrion inner membrane. The enzyme catalyses a ubiquinone + NADH + 5 H(+)(in) = a ubiquinol + NAD(+) + 4 H(+)(out). In terms of biological role, core subunit of the mitochondrial membrane respiratory chain NADH dehydrogenase (Complex I) which catalyzes electron transfer from NADH through the respiratory chain, using ubiquinone as an electron acceptor. Essential for the catalytic activity and assembly of complex I. The chain is NADH-ubiquinone oxidoreductase chain 2 from Sylvisorex johnstoni (Johnston's forest shrew).